A 174-amino-acid chain; its full sequence is Large ribosomal subunit protein bL17 (174 aa).

Belongs to the bacterial ribosomal protein bL17 family. Part of the 50S ribosomal subunit. Contacts protein L32.

The sequence is that of Large ribosomal subunit protein bL17 from Ruminiclostridium cellulolyticum (strain ATCC 35319 / DSM 5812 / JCM 6584 / H10) (Clostridium cellulolyticum).